Consider the following 229-residue polypeptide: Ribonuclease T (229 aa).

Residues 23–197 (VIIDVETAGF…YDTERTAKLF (175 aa)) form the Exonuclease domain. The Mg(2+) site is built by Asp26, Glu28, His184, and Asp189. The active-site Proton donor/acceptor is the His184.

The protein belongs to the RNase T family. Homodimer. Mg(2+) serves as cofactor.

Functionally, trims short 3' overhangs of a variety of RNA species, leaving a one or two nucleotide 3' overhang. Responsible for the end-turnover of tRNA: specifically removes the terminal AMP residue from uncharged tRNA (tRNA-C-C-A). Also appears to be involved in tRNA biosynthesis. The protein is Ribonuclease T of Haemophilus influenzae (strain PittGG).